A 156-amino-acid polypeptide reads, in one-letter code: Peptide deformylase 1 (156 aa).

2 residues coordinate Fe cation: Cys-90 and His-132. Glu-133 is an active-site residue. His-136 contacts Fe cation.

It belongs to the polypeptide deformylase family. It depends on Fe(2+) as a cofactor.

The enzyme catalyses N-terminal N-formyl-L-methionyl-[peptide] + H2O = N-terminal L-methionyl-[peptide] + formate. Its function is as follows. Removes the formyl group from the N-terminal Met of newly synthesized proteins. Requires at least a dipeptide for an efficient rate of reaction. N-terminal L-methionine is a prerequisite for activity but the enzyme has broad specificity at other positions. This chain is Peptide deformylase 1, found in Bacillus cereus (strain ATCC 14579 / DSM 31 / CCUG 7414 / JCM 2152 / NBRC 15305 / NCIMB 9373 / NCTC 2599 / NRRL B-3711).